We begin with the raw amino-acid sequence, 386 residues long: Uroporphyrinogen decarboxylase (386 aa).

Coproporphyrinogen I-binding residues include Arg44, Ala46, Arg48, Arg57, Asp93, Tyr170, Ser225, and His364. Residues Arg44, Ala46, and Arg48 each contribute to the coproporphyrinogen III site. Residues Asp93, Tyr170, Ser225, and His364 each coordinate coproporphyrinogen III.

The protein belongs to the uroporphyrinogen decarboxylase family. Homodimer.

The protein localises to the cytoplasm. It is found in the cytosol. The catalysed reaction is uroporphyrinogen III + 4 H(+) = coproporphyrinogen III + 4 CO2. Its pathway is porphyrin-containing compound metabolism; protoporphyrin-IX biosynthesis; coproporphyrinogen-III from 5-aminolevulinate: step 4/4. In terms of biological role, catalyzes the decarboxylation of four acetate groups of uroporphyrinogen-III to yield coproporphyrinogen-III. In Drosophila virilis (Fruit fly), this protein is Uroporphyrinogen decarboxylase.